Reading from the N-terminus, the 446-residue chain is Glutamine synthetase (446 aa).

One can recognise a GS beta-grasp domain in the interval 15–103 (ENVKFLRLQI…LICDVYYPDG (89 aa)). Residues 110–446 (PRYVLKRQIE…WELDRYLATY (337 aa)) form the GS catalytic domain. Glu-134 and Glu-136 together coordinate Mg(2+). ATP is bound at residue Glu-186. Residues Glu-191 and Glu-198 each contribute to the Mg(2+) site. L-glutamate-binding positions include 242–243 (NG) and Gly-243. A Mg(2+)-binding site is contributed by His-247. Ser-251 is a binding site for ATP. The L-glutamate site is built by Arg-300, Glu-306, and Arg-318. ATP-binding residues include Arg-318 and Arg-323. Glu-335 contacts Mg(2+). Residue Arg-337 participates in L-glutamate binding.

It belongs to the glutamine synthetase family. In terms of assembly, interacts with GCBP (TTHA1554). It depends on Mg(2+) as a cofactor.

It is found in the cytoplasm. It carries out the reaction L-glutamate + NH4(+) + ATP = L-glutamine + ADP + phosphate + H(+). Its activity is regulated as follows. Activity increases by approximately two-fold in the presence of GCBP. Functionally, catalyzes the ATP-dependent biosynthesis of glutamine from glutamate and ammonia. The chain is Glutamine synthetase from Thermus thermophilus (strain ATCC 27634 / DSM 579 / HB8).